The chain runs to 322 residues: Eukaryotic translation initiation factor 3 subunit I (322 aa).

WD repeat units lie at residues 4–43 (GHER…RLGT), 46–85 (GHQG…VIAS), 141–180 (MTES…KVVD), 184–223 (DHTG…CLKT), and 281–322 (GHFG…NIFE).

It belongs to the eIF-3 subunit I family. In terms of assembly, component of the eukaryotic translation initiation factor 3 (eIF-3) complex. The eIF-3 complex interacts with pix.

It is found in the cytoplasm. In terms of biological role, component of the eukaryotic translation initiation factor 3 (eIF-3) complex, which is involved in protein synthesis of a specialized repertoire of mRNAs and, together with other initiation factors, stimulates binding of mRNA and methionyl-tRNAi to the 40S ribosome. The eIF-3 complex specifically targets and initiates translation of a subset of mRNAs involved in cell proliferation. The protein is Eukaryotic translation initiation factor 3 subunit I of Drosophila willistoni (Fruit fly).